A 345-amino-acid chain; its full sequence is 4-hydroxyproline 2-epimerase (345 aa).

Gln85 provides a ligand contact to substrate. Catalysis depends on Ser93, which acts as the Proton acceptor. Residues 94–95 and Asp251 each bind substrate; that span reads GS. Cys255 (proton donor) is an active-site residue. 256–257 serves as a coordination point for substrate; sequence GT.

The protein belongs to the proline racemase family.

The enzyme catalyses trans-4-hydroxy-L-proline = cis-4-hydroxy-D-proline. Its function is as follows. Catalyzes the epimerization of trans-4-hydroxy-L-proline (t4LHyp) to cis-4-hydroxy-D-proline (c4DHyp). May be involved in a degradation pathway of t4LHyp, which would allow A.tumefaciens to grow on t4LHyp as a sole carbon source. Can also catalyze the epimerization of trans-3-hydroxy-L-proline (t3LHyp) to cis-3-hydroxy-D-proline (c3DHyp) in vitro. Displays no proline racemase activity. In Agrobacterium fabrum (strain C58 / ATCC 33970) (Agrobacterium tumefaciens (strain C58)), this protein is 4-hydroxyproline 2-epimerase.